The sequence spans 961 residues: Translation initiation factor IF-2 (961 aa).

Over residues 146–158 the composition is skewed to polar residues; that stretch reads PSVPNKTLTTTPH. Residues 146 to 373 are disordered; sequence PSVPNKTLTT…KTTSQVTTQP (228 aa). A compositionally biased stretch (basic and acidic residues) spans 163-176; it reads NHSEKDVLESHDSS. Over residues 177 to 187 the composition is skewed to low complexity; sequence NKNIKQSSSQN. A compositionally biased stretch (basic and acidic residues) spans 230-239; sequence SEEKNVDIQQ. Composition is skewed to polar residues over residues 241 to 285 and 301 to 310; these read EIPS…TAPH and YQGQNRNNFI. The segment covering 355–364 has biased composition (basic residues); sequence NRGRKRHKQK. Positions 460 to 627 constitute a tr-type G domain; the sequence is RRPPVVTIMG…LLALQTDILE (168 aa). The interval 469–476 is G1; the sequence is GHVDHGKT. 469–476 lines the GTP pocket; the sequence is GHVDHGKT. The interval 494–498 is G2; sequence GITQH. The G3 stretch occupies residues 515–518; the sequence is DTPG. Residues 515–519 and 569–572 each bind GTP; these read DTPGH and NKMD. A G4 region spans residues 569-572; sequence NKMD. A G5 region spans residues 605-607; the sequence is SAK.

Belongs to the TRAFAC class translation factor GTPase superfamily. Classic translation factor GTPase family. IF-2 subfamily.

It is found in the cytoplasm. Functionally, one of the essential components for the initiation of protein synthesis. Protects formylmethionyl-tRNA from spontaneous hydrolysis and promotes its binding to the 30S ribosomal subunits. Also involved in the hydrolysis of GTP during the formation of the 70S ribosomal complex. The sequence is that of Translation initiation factor IF-2 from Lawsonia intracellularis (strain PHE/MN1-00).